The primary structure comprises 151 residues: Caveolin-3 (151 aa).

The Cytoplasmic segment spans residues M1 to P83. K38 is covalently cross-linked (Glycyl lysine isopeptide (Lys-Gly) (interchain with G-Cter in SUMO3)). A required for interaction with DAG1 region spans residues T64 to I114. The helical intramembrane region spans L84 to V104. Topologically, residues P105–G151 are cytoplasmic.

Belongs to the caveolin family. As to quaternary structure, homooligomer. Interacts with DYSF. Interacts with DLG1 and KCNA5; forms a ternary complex. Interacts with DAG1 (via its C-terminal); the interaction prevents binding of DAG1 with DMD. Interacts with TRIM72. Interacts with MUSK; may regulate MUSK signaling. Interacts with POPDC1. Interacts with CAVIN1, CAVIN2 and CAVIN4. Post-translationally, sumoylation with SUMO3 by PIAS4 may reduce agonist-induced internalization and desensitization of adrenergic receptor ABRD2. In terms of tissue distribution, expressed predominantly in muscle.

It is found in the golgi apparatus membrane. It localises to the cell membrane. Its subcellular location is the membrane. The protein localises to the caveola. The protein resides in the sarcolemma. Functionally, may act as a scaffolding protein within caveolar membranes. Interacts directly with G-protein alpha subunits and can functionally regulate their activity. May also regulate voltage-gated potassium channels. Plays a role in the sarcolemma repair mechanism of both skeletal muscle and cardiomyocytes that permits rapid resealing of membranes disrupted by mechanical stress. Mediates the recruitment of CAVIN2 and CAVIN3 proteins to the caveolae. The chain is Caveolin-3 from Mus musculus (Mouse).